A 215-amino-acid chain; its full sequence is Sodium channel regulatory subunit beta-3 (215 aa).

A signal peptide spans 1–22 (MPAFNRLFPLASLVLIYWVSVC). The Extracellular segment spans residues 23–156 (FPVCVEVPSE…EEAGEDFTSV (134 aa)). 2 cysteine pairs are disulfide-bonded: C26-C48 and C45-C120. The Ig-like C2-type domain occupies 32 to 154 (ETEAVQGNPM…VTEEAGEDFT (123 aa)). N95, N109, N113, and N121 each carry an N-linked (GlcNAc...) asparagine glycan. A helical membrane pass occupies residues 157–178 (VSEIMMYILLVFLTLWLLIEMI). The Cytoplasmic segment spans residues 179 to 215 (YCYRKVSKAEEAAQENASDYLAIPSENKENSAVPVEE).

This sequence belongs to the sodium channel auxiliary subunit SCN3B (TC 8.A.17) family. As to quaternary structure, a voltage-gated sodium (Nav) channel consists of an ion-conducting pore-forming alpha subunit functional on its own that is regulated by one or more beta subunits. Forms homodimers and homotrimers. SCN3B is non-covalently associated with alpha subunits and induces the formation of alpha subunit oligomers, including trimers. Interacts with SCN5A/Nav1.5; regulatory subunit of SCN5A/Nav1.5. Interacts with SCN7A/Nav2.1; probable regulatory subunit of SCN7A/Nav2.1. Interacts with SCN10A; regulatory subunit of SCN10A/Nav1.8. Interacts with NFASC; probably involved in targeting the sodium channels to the nodes of Ranvier. In terms of processing, intramolecular disulfide bonds favor the voltage-gated sodium channel oligomeric complex assembly. Post-translationally, N-glycosylated. In terms of tissue distribution, expressed in the atrium.

It localises to the cell membrane. In terms of biological role, regulatory subunit of multiple voltage-gated sodium (Nav) channels directly mediating the depolarization of excitable membranes. Navs, also called VGSCs (voltage-gated sodium channels) or VDSCs (voltage-dependent sodium channels), operate by switching between closed and open conformations depending on the voltage difference across the membrane. In the open conformation they allow Na(+) ions to selectively pass through the pore, along their electrochemical gradient. The influx of Na+ ions provokes membrane depolarization, initiating the propagation of electrical signals throughout cells and tissues. The accessory beta subunits participate in localization and functional modulation of the Nav channels. Modulates the activity of SCN2A/Nav1.2, causing a hyperpolarizing shift in the voltage-dependence of inactivation of the channel and increasing the fraction of channels operating in the fast gating mode. Modulates the activity of SCN5A/Nav1.5. Could also regulate the atypical sodium channel SCN7A/Nav2.1. Modulates the activity of SCN10A/Nav1.8, regulating its oligomerization and accelerating the recovery from inactivation. The sequence is that of Sodium channel regulatory subunit beta-3 from Homo sapiens (Human).